Consider the following 92-residue polypeptide: Large ribosomal subunit protein bL25 (92 aa).

This sequence belongs to the bacterial ribosomal protein bL25 family. Part of the 50S ribosomal subunit; part of the 5S rRNA/L5/L18/L25 subcomplex. Contacts the 5S rRNA. Binds to the 5S rRNA independently of L5 and L18.

Its function is as follows. This is one of the proteins that binds to the 5S RNA in the ribosome where it forms part of the central protuberance. This Vibrio cholerae serotype O1 (strain ATCC 39541 / Classical Ogawa 395 / O395) protein is Large ribosomal subunit protein bL25.